Reading from the N-terminus, the 1347-residue chain is Protocadherin-11 X-linked (1347 aa).

A signal peptide spans 1-23 (MDLLSGTYIFAVLLACVVFHSGA). Residues 24–812 (QEKNYTIREE…VSSPTNDYVK (789 aa)) lie on the Extracellular side of the membrane. Cadherin domains lie at 26-139 (KNYT…APLF), 140-249 (PATV…HPVF), 250-355 (KETE…VPSI), 362-466 (NPVN…APVF), 467-570 (TQSF…SPVF), 571-673 (THNE…KPVF), and 677-795 (PSNY…APVT). N-linked (GlcNAc...) asparagine glycosylation is found at Asn27, Asn48, and Asn54. Asn344 is a glycosylation site (N-linked (GlcNAc...) asparagine). A glycan (N-linked (GlcNAc...) asparagine) is linked at Asn553. Residue Asn773 is glycosylated (N-linked (GlcNAc...) asparagine). Residues 813-833 (ILVAAVAGTITVVVVIFITAV) form a helical membrane-spanning segment. Over 834–1347 (VRCRQAPHLK…DSPIMEEHPL (514 aa)) the chain is Cytoplasmic. Disordered regions lie at residues 1057–1091 (LPEG…GYPQ), 1097–1116 (RATP…ESTF), and 1326–1347 (FTPR…EHPL).

It is found in the cell membrane. Its function is as follows. Potential calcium-dependent cell-adhesion protein. The sequence is that of Protocadherin-11 X-linked (PCDH11X) from Gorilla gorilla gorilla (Western lowland gorilla).